Here is a 331-residue protein sequence, read N- to C-terminus: Ferredoxin--NADP reductase 2 (331 aa).

FAD is bound by residues Glu-37, Gln-45, Tyr-50, Val-90, Phe-124, Asp-286, and Thr-327.

Belongs to the ferredoxin--NADP reductase type 2 family. As to quaternary structure, homodimer. Requires FAD as cofactor.

The catalysed reaction is 2 reduced [2Fe-2S]-[ferredoxin] + NADP(+) + H(+) = 2 oxidized [2Fe-2S]-[ferredoxin] + NADPH. This is Ferredoxin--NADP reductase 2 from Listeria monocytogenes serovar 1/2a (strain ATCC BAA-679 / EGD-e).